The sequence spans 379 residues: tRNA (guanine(26)-N(2))-dimethyltransferase (379 aa).

The region spanning 4 to 375 (VEVLEGKAKI…APYEVFVNVL (372 aa)) is the Trm1 methyltransferase domain. Positions 36, 61, 78, 120, and 121 each coordinate S-adenosyl-L-methionine.

Belongs to the class I-like SAM-binding methyltransferase superfamily. Trm1 family.

It catalyses the reaction guanosine(26) in tRNA + 2 S-adenosyl-L-methionine = N(2)-dimethylguanosine(26) in tRNA + 2 S-adenosyl-L-homocysteine + 2 H(+). Dimethylates a single guanine residue at position 26 of a number of tRNAs using S-adenosyl-L-methionine as donor of the methyl groups. This Pyrococcus abyssi (strain GE5 / Orsay) protein is tRNA (guanine(26)-N(2))-dimethyltransferase.